Here is a 691-residue protein sequence, read N- to C-terminus: Hormonally up-regulated neu tumor-associated kinase homolog A (691 aa).

The region spanning 55 to 313 is the Protein kinase domain; sequence YLIGRKLGEG…IQQALANRWL (259 aa). ATP-binding positions include 61 to 69 and Lys84; that span reads LGEGSFAKV. Asp179 (proton acceptor) is an active-site residue. Residues 406–425 are compositionally biased toward basic and acidic residues; that stretch reads MNKNSYEERRSKDLEKRGEP. Disordered stretches follow at residues 406-475, 499-518, 580-640, and 655-679; these read MNKN…GGLS, QSPD…HSQE, FQFD…SRGR, and QVVS…SPGY. Residues 440–453 show a composition bias toward polar residues; the sequence is SHRQNACLTPQGHS. Residues 457–470 show a composition bias toward basic and acidic residues; the sequence is PVKERRSSKSERES. Polar residues predominate over residues 582-597; that stretch reads FDNTSPSKSHFNQASF. Over residues 604-620 the composition is skewed to low complexity; sequence SPSSPESMSPTSPHSPS. A compositionally biased stretch (polar residues) spans 621 to 631; sequence CNNNISGNLGS.

This sequence belongs to the protein kinase superfamily. CAMK Ser/Thr protein kinase family. SNF1 subfamily.

The enzyme catalyses L-seryl-[protein] + ATP = O-phospho-L-seryl-[protein] + ADP + H(+). It carries out the reaction L-threonyl-[protein] + ATP = O-phospho-L-threonyl-[protein] + ADP + H(+). This is Hormonally up-regulated neu tumor-associated kinase homolog A (hunk-a) from Xenopus laevis (African clawed frog).